We begin with the raw amino-acid sequence, 1356 residues long: RHO1 GDP-GTP exchange protein 2 (1356 aa).

An N-acetylserine modification is found at Ser-2. 2 disordered regions span residues 74–94 (RRSG…EMKG) and 109–175 (EVPD…PRNE). Phosphoserine is present on Ser-76. Composition is skewed to polar residues over residues 109 to 125 (EVPD…TPVS) and 147 to 157 (HIYSTSNSASR). Ser-193 carries the phosphoserine modification. 5 disordered regions span residues 202 to 291 (LKKQ…RSMS), 303 to 362 (SFQS…SSSN), 383 to 409 (SVSG…VMSA), 531 to 571 (GNHS…SQQK), and 626 to 645 (NISM…TSSV). A compositionally biased stretch (polar residues) spans 204–221 (KQSSFSTGSASTTPTQAR). Ser-223 bears the Phosphoserine mark. A compositionally biased stretch (basic and acidic residues) spans 235 to 244 (SSKDLHEQHQ). A compositionally biased stretch (low complexity) spans 250 to 265 (QHNNINNHNNNNTNNN). The span at 271–281 (VGSSNSNYPQH) shows a compositional bias: polar residues. The segment covering 282–291 (SHSISSRSMS) has biased composition (low complexity). The segment covering 303–325 (SFQSKTSNSRKATQKYDITSNPF) has biased composition (polar residues). The segment covering 329–338 (HHHHHHHHSS) has biased composition (basic residues). 2 stretches are compositionally biased toward low complexity: residues 339–362 (NSHS…SSSN) and 383–401 (SVSG…TPLS). Phosphoserine is present on residues Ser-566 and Ser-628. The DH domain maps to 659–846 (KRQEAIYEVY…RDFMKRIDQA (188 aa)). In terms of domain architecture, CNH spans 1034–1336 (TNKINSVTSC…RLLQTSTQEI (303 aa)).

Its function is as follows. Stimulates the exchange of RHO1 GDP-bound form into GTP-bound form. The polypeptide is RHO1 GDP-GTP exchange protein 2 (ROM2) (Saccharomyces cerevisiae (strain ATCC 204508 / S288c) (Baker's yeast)).